A 245-amino-acid chain; its full sequence is tRNA (guanine-N(1)-)-methyltransferase (245 aa).

S-adenosyl-L-methionine is bound by residues Gly-113 and 133–138; that span reads IGDYVL.

Belongs to the RNA methyltransferase TrmD family. As to quaternary structure, homodimer.

The protein resides in the cytoplasm. The enzyme catalyses guanosine(37) in tRNA + S-adenosyl-L-methionine = N(1)-methylguanosine(37) in tRNA + S-adenosyl-L-homocysteine + H(+). Specifically methylates guanosine-37 in various tRNAs. In Anoxybacillus flavithermus (strain DSM 21510 / WK1), this protein is tRNA (guanine-N(1)-)-methyltransferase.